The following is a 554-amino-acid chain: Dihydroxy-acid dehydratase (554 aa).

Asp-78 lines the Mg(2+) pocket. [2Fe-2S] cluster is bound at residue Cys-119. Mg(2+)-binding residues include Asp-120 and Lys-121. Position 121 is an N6-carboxylysine (Lys-121). Cys-191 serves as a coordination point for [2Fe-2S] cluster. Glu-442 serves as a coordination point for Mg(2+). Ser-468 functions as the Proton acceptor in the catalytic mechanism.

It belongs to the IlvD/Edd family. As to quaternary structure, homodimer. [2Fe-2S] cluster is required as a cofactor. The cofactor is Mg(2+).

It carries out the reaction (2R)-2,3-dihydroxy-3-methylbutanoate = 3-methyl-2-oxobutanoate + H2O. The catalysed reaction is (2R,3R)-2,3-dihydroxy-3-methylpentanoate = (S)-3-methyl-2-oxopentanoate + H2O. The protein operates within amino-acid biosynthesis; L-isoleucine biosynthesis; L-isoleucine from 2-oxobutanoate: step 3/4. It functions in the pathway amino-acid biosynthesis; L-valine biosynthesis; L-valine from pyruvate: step 3/4. In terms of biological role, functions in the biosynthesis of branched-chain amino acids. Catalyzes the dehydration of (2R,3R)-2,3-dihydroxy-3-methylpentanoate (2,3-dihydroxy-3-methylvalerate) into 2-oxo-3-methylpentanoate (2-oxo-3-methylvalerate) and of (2R)-2,3-dihydroxy-3-methylbutanoate (2,3-dihydroxyisovalerate) into 2-oxo-3-methylbutanoate (2-oxoisovalerate), the penultimate precursor to L-isoleucine and L-valine, respectively. This Thermotoga petrophila (strain ATCC BAA-488 / DSM 13995 / JCM 10881 / RKU-1) protein is Dihydroxy-acid dehydratase.